We begin with the raw amino-acid sequence, 130 residues long: uncharacterized protein (130 aa).

This is an uncharacterized protein from Treponema pallidum (strain Nichols).